The primary structure comprises 211 residues: Small ribosomal subunit protein uS3 (211 aa).

The KH type-2 domain maps to 38 to 106 (LRNFLKKRLF…EIYLNIQEVR (69 aa)).

Belongs to the universal ribosomal protein uS3 family. Part of the 30S ribosomal subunit. Forms a tight complex with proteins S10 and S14.

In terms of biological role, binds the lower part of the 30S subunit head. Binds mRNA in the 70S ribosome, positioning it for translation. This Geobacter metallireducens (strain ATCC 53774 / DSM 7210 / GS-15) protein is Small ribosomal subunit protein uS3.